Consider the following 306-residue polypeptide: UDP-N-acetylenolpyruvoylglucosamine reductase (306 aa).

The FAD-binding PCMH-type domain maps to 33–197 (TGGEADFYLS…LEAAFTLEPG (165 aa)). Residue Arg-176 is part of the active site. Ser-226 acts as the Proton donor in catalysis. Glu-296 is a catalytic residue.

The protein belongs to the MurB family. It depends on FAD as a cofactor.

The protein resides in the cytoplasm. The enzyme catalyses UDP-N-acetyl-alpha-D-muramate + NADP(+) = UDP-N-acetyl-3-O-(1-carboxyvinyl)-alpha-D-glucosamine + NADPH + H(+). It functions in the pathway cell wall biogenesis; peptidoglycan biosynthesis. Its function is as follows. Cell wall formation. This is UDP-N-acetylenolpyruvoylglucosamine reductase from Staphylococcus epidermidis (strain ATCC 35984 / DSM 28319 / BCRC 17069 / CCUG 31568 / BM 3577 / RP62A).